The chain runs to 206 residues: Putative amino-acid transporter YggA (206 aa).

The next 6 helical transmembrane spans lie at 1–21 (MFAT…PIGA), 37–57 (LLAA…GVFG), 65–85 (SPIG…WFGI), 116–136 (LGVT…LGSF), 148–168 (FAAG…FGAA), and 185–205 (TIVG…ALLA).

Belongs to the LysE/ArgO transporter (TC 2.A.75) family.

It is found in the cell membrane. The polypeptide is Putative amino-acid transporter YggA (yggA) (Aeromonas salmonicida).